Consider the following 135-residue polypeptide: Small ribosomal subunit protein uS8 (135 aa).

Belongs to the universal ribosomal protein uS8 family. Part of the 30S ribosomal subunit. Contacts proteins S5 and S12.

Its function is as follows. One of the primary rRNA binding proteins, it binds directly to 16S rRNA central domain where it helps coordinate assembly of the platform of the 30S subunit. The sequence is that of Small ribosomal subunit protein uS8 from Nocardioides sp. (strain ATCC BAA-499 / JS614).